Here is a 1479-residue protein sequence, read N- to C-terminus: Protein CHROMATIN REMODELING 20 (1479 aa).

Residues 19-49 (EVIVESKEDEMDIIIEENREAEQEVMEVKAR) are a coiled coil. The segment covering 40–55 (EQEVMEVKARDGRGEQ) has biased composition (basic and acidic residues). The disordered stretch occupies residues 40 to 109 (EQEVMEVKAR…DELDLEKPLS (70 aa)). Residues 76–86 (DASSRSESSDF) show a composition bias toward low complexity. Positions 94-109 (ILSRRDDELDLEKPLS) are enriched in basic and acidic residues. Positions 109-199 (SEEEIDELIS…EQLDGAGIEL (91 aa)) form a coiled coil. Positions 472 to 601 (RDDSQNPANN…KKSIELSSDS (130 aa)) constitute an ADD domain. The segment at 483-514 (RCTACNKVAVEVHSHPLLEVIVCMDCKRSIED) adopts a GATA-type; atypical zinc-finger fold. The PHD-type; atypical zinc-finger motif lies at 524–577 (ERHCEWCGHIADLIDCRTCEKLFCASCIKRNIGEEYMSEAQSSGWDCCCCSPIP). The stretch at 578-598 (LQRLTLELEKAMRDKKSIELS) forms a coiled coil. Positions 594–615 (SIELSSDSSSDSSSDNNSVDTD) are disordered. Positions 598 to 615 (SSDSSSDSSSDNNSVDTD) are enriched in low complexity. The Helicase ATP-binding domain occupies 741 to 924 (VKSGDKGLGC…YCMVDFVREG (184 aa)). 754 to 761 (HTMGLGKT) provides a ligand contact to ATP. The DEAH box motif lies at 875–878 (DEAH). The Helicase C-terminal domain occupies 1122-1290 (DILSMSADVG…QVHRTISKEE (169 aa)). Residues 1400–1423 (SESPVVPKPSPSTQTEPLPQPKGF) form a disordered region.

It belongs to the SNF2/RAD54 helicase family.

It is found in the nucleus. The protein localises to the chromosome. The protein resides in the telomere. Functionally, involved in transcriptional regulation and chromatin remodeling. Facilitates DNA replication in multiple cellular environments and is required for efficient replication of a subset of genomic loci. Binds to DNA tandem repeat sequences in both telomeres and euchromatin and in vitro binds DNA quadruplex structures. May help stabilizing G-rich regions into regular chromatin structures by remodeling G4 DNA and incorporating H3.3-containing nucleosomes. Involved in DNA repair of gamma-irradiation-mediated damages. The protein is Protein CHROMATIN REMODELING 20 of Arabidopsis thaliana (Mouse-ear cress).